The primary structure comprises 1808 residues: Tenascin (1808 aa).

The signal sequence occupies residues 1–22 (MGLPSQVLACAILGLLYQHASG). A propeptide spanning residues 23 to 33 (GLIKRIIRQKR) is cleaved from the precursor. Residue N38 is glycosylated (N-linked (GlcNAc...) asparagine). S72 is a glycosylation site (O-linked (Xyl...) (chondroitin sulfate) serine). A coiled-coil region spans residues 118 to 142 (DIKDLLSRLEELEGLVSSLREQCAS). 2 N-linked (GlcNAc...) asparagine glycosylation sites follow: N168 and N186. The EGF-like 1; incomplete domain occupies 176 to 188 (CVCEPGWKGPNCS). EGF-like domains lie at 188-219 (SEPA…EDCS), 219-250 (SQAA…PDCG), 250-281 (GEEL…EDCN), 281-312 (NEPL…EDCG), 312-343 (GELI…EDCG), 343-374 (GELT…DDCS), 374-405 (SQKR…EDCG), 405-436 (GELR…EDCG), 436-467 (GELR…EDCG), 467-498 (GELR…EDCG), 498-529 (GELR…EDCG), 529-560 (GELS…EDCR), and 560-591 (RERS…IDCS). Cystine bridges form between C192–C202, C196–C207, C209–C218, C223–C233, C227–C238, C240–C249, C254–C264, C258–C269, C271–C280, C285–C295, C289–C300, C302–C311, C316–C326, C320–C331, C333–C342, C347–C357, C351–C362, C364–C373, C378–C388, C382–C393, C395–C404, C409–C419, C413–C424, C426–C435, C440–C450, C444–C455, C457–C466, C471–C481, C475–C486, C488–C497, C502–C512, C506–C517, C519–C528, C533–C543, C537–C548, C550–C559, C564–C574, C568–C579, and C581–C590. A glycan (N-linked (GlcNAc...) asparagine) is linked at N328. Fibronectin type-III domains are found at residues 595-685 (PPTE…LPAP), 686-775 (EGLK…TKLD), 776-866 (APSQ…DLDA), 867-957 (PRNL…TDLD), 958-1046 (NPKD…EEEP), 1047-1138 (ELGN…AHPE), 1139-1228 (VGEL…EAEP), 1229-1318 (EVDN…TVVG), 1319-1408 (SPKG…ALDS), 1409-1495 (PSGL…TGLD), and 1496-1584 (APKD…TGLL). Residues N603, N643, N751, and N759 are each glycosylated (N-linked (GlcNAc...) asparagine). N-linked (GlcNAc...) asparagine glycans are attached at residues N1050, N1090, N1101, N1112, N1153, and N1183. The N-linked (GlcNAc...) asparagine glycan is linked to N1416. Positions 1582-1797 (GLLYPYPKDC…FAEMKLRPSS (216 aa)) constitute a Fibrinogen C-terminal domain. N1736 and N1769 each carry an N-linked (GlcNAc...) asparagine glycan.

It belongs to the tenascin family. As to quaternary structure, homohexamer; disulfide-linked. A homotrimer may be formed in the triple coiled-coil region and may be stabilized by disulfide rings at both ends. Two of such half-hexabrachions may be disulfide linked within the central globule. Interacts with CSPG5. In terms of tissue distribution, expressed in the brain.

It localises to the secreted. The protein localises to the extracellular space. Its subcellular location is the extracellular matrix. In terms of biological role, extracellular matrix protein implicated in guidance of migrating neurons as well as axons during development, synaptic plasticity as well as neuronal regeneration. Ligand for integrins alpha-8/beta-1, alpha-9/beta-1, alpha-V/beta-3 and alpha-V/beta-6. This Gallus gallus (Chicken) protein is Tenascin (TNC).